Here is a 1167-residue protein sequence, read N- to C-terminus: Melanoma receptor tyrosine-protein kinase (1167 aa).

An N-terminal signal peptide occupies residues 1–25 (MEFLRGGAALLQLLLVLSISRCCST). At 26–642 (DPDRKVCQGT…GCRGDIVSHS (617 aa)) the chain is on the extracellular side. Asparagine 114, asparagine 144, and asparagine 201 each carry an N-linked (GlcNAc...) asparagine glycan. 11 disulfides stabilise this stretch: cysteine 195–cysteine 204, cysteine 199–cysteine 212, cysteine 220–cysteine 228, cysteine 224–cysteine 236, cysteine 237–cysteine 245, cysteine 241–cysteine 253, cysteine 256–cysteine 265, cysteine 269–cysteine 296, cysteine 300–cysteine 311, cysteine 315–cysteine 330, and cysteine 333–cysteine 337. N-linked (GlcNAc...) asparagine glycosylation is found at asparagine 356, asparagine 365, asparagine 398, asparagine 417, and asparagine 501. 9 disulfides stabilise this stretch: cysteine 504/cysteine 513, cysteine 508/cysteine 521, cysteine 524/cysteine 533, cysteine 537/cysteine 553, cysteine 556/cysteine 569, cysteine 560/cysteine 577, cysteine 593/cysteine 615, cysteine 618/cysteine 626, and cysteine 622/cysteine 634. An N-linked (GlcNAc...) asparagine glycan is attached at asparagine 576. A glycan (N-linked (GlcNAc...) asparagine) is linked at asparagine 621. A helical membrane pass occupies residues 643-665 (SLAVGLVSGLLITVIVALLIVVL). At 666–1167 (LRRRRIKRKR…QGGALYTPVR (502 aa)) the chain is on the cytoplasmic side. In terms of domain architecture, Protein kinase spans 710–977 (FKKDRVLGSG…QMARDPSRYL (268 aa)). Residues 716-724 (LGSGAFGTV) and lysine 743 each bind ATP. The active-site Proton acceptor is aspartate 835.

The protein belongs to the protein kinase superfamily. Tyr protein kinase family. EGF receptor subfamily.

The protein localises to the membrane. It carries out the reaction L-tyrosyl-[protein] + ATP = O-phospho-L-tyrosyl-[protein] + ADP + H(+). Functionally, probable receptor with tyrosine-protein kinase activity. This chain is Melanoma receptor tyrosine-protein kinase (xmrk), found in Xiphophorus maculatus (Southern platyfish).